The following is a 262-amino-acid chain: VPS74-like protein DDB_G0288371 (262 aa).

This sequence belongs to the GOLPH3/VPS74 family.

Its subcellular location is the golgi apparatus. The protein resides in the golgi stack membrane. Phosphatidylinositol-4-phosphate-binding protein that links Golgi membranes to the cytoskeleton and may participate in the tensile force required for vesicle budding from the Golgi. Thereby, may play a role in Golgi membrane trafficking. May also bind to the coatomer to regulate Golgi membrane trafficking. May play a role in anterograde transport from the Golgi to the plasma membrane and regulate secretion. May be involved in vacuolar protein sorting. The polypeptide is VPS74-like protein DDB_G0288371 (Dictyostelium discoideum (Social amoeba)).